Reading from the N-terminus, the 181-residue chain is Large ribosomal subunit protein uL5 (181 aa).

It belongs to the universal ribosomal protein uL5 family. In terms of assembly, part of the 50S ribosomal subunit; part of the 5S rRNA/L5/L18/L25 subcomplex. Contacts the 5S rRNA and the P site tRNA. Forms a bridge to the 30S subunit in the 70S ribosome.

This is one of the proteins that bind and probably mediate the attachment of the 5S RNA into the large ribosomal subunit, where it forms part of the central protuberance. In the 70S ribosome it contacts protein S13 of the 30S subunit (bridge B1b), connecting the 2 subunits; this bridge is implicated in subunit movement. Contacts the P site tRNA; the 5S rRNA and some of its associated proteins might help stabilize positioning of ribosome-bound tRNAs. In Mesomycoplasma hyopneumoniae (strain 232) (Mycoplasma hyopneumoniae), this protein is Large ribosomal subunit protein uL5.